A 157-amino-acid polypeptide reads, in one-letter code: Endoribonuclease YbeY (157 aa).

Zn(2+) is bound by residues H114, H118, and H124.

This sequence belongs to the endoribonuclease YbeY family. The cofactor is Zn(2+).

It is found in the cytoplasm. Single strand-specific metallo-endoribonuclease involved in late-stage 70S ribosome quality control and in maturation of the 3' terminus of the 16S rRNA. The protein is Endoribonuclease YbeY of Caulobacter vibrioides (strain ATCC 19089 / CIP 103742 / CB 15) (Caulobacter crescentus).